The following is a 303-amino-acid chain: Coenzyme PQQ synthesis protein B (303 aa).

Belongs to the PqqB family.

It participates in cofactor biosynthesis; pyrroloquinoline quinone biosynthesis. In terms of biological role, may be involved in the transport of PQQ or its precursor to the periplasm. In Pseudomonas savastanoi pv. phaseolicola (strain 1448A / Race 6) (Pseudomonas syringae pv. phaseolicola (strain 1448A / Race 6)), this protein is Coenzyme PQQ synthesis protein B.